Consider the following 165-residue polypeptide: Protoporphyrinogen IX oxidase (165 aa).

The next 4 helical transmembrane spans lie at 26 to 46 (LHVI…RLFV), 77 to 97 (AMIA…IVDW), 99 to 119 (MLWP…HMWL), and 145 to 165 (PTLL…YWGF). His27 provides a ligand contact to heme. Lys105 lines the heme pocket.

Belongs to the HemJ family. As to quaternary structure, homodimer. Requires heme b as cofactor.

The protein resides in the cell membrane. It carries out the reaction protoporphyrinogen IX + 3 A = protoporphyrin IX + 3 AH2. It functions in the pathway porphyrin-containing compound metabolism; protoporphyrin-IX biosynthesis; protoporphyrin-IX from protoporphyrinogen-IX: step 1/1. Functionally, catalyzes the oxidation of protoporphyrinogen IX to protoporphyrin IX. Is involved in the biosynthesis of tetrapyrrole molecules like heme and chlorophyll. Does not use oxygen or artificial electron acceptors such as menadione or benzoquinone. In Cereibacter sphaeroides (strain ATCC 17023 / DSM 158 / JCM 6121 / CCUG 31486 / LMG 2827 / NBRC 12203 / NCIMB 8253 / ATH 2.4.1.) (Rhodobacter sphaeroides), this protein is Protoporphyrinogen IX oxidase.